The following is a 71-amino-acid chain: Disintegrin simusmin (71 aa).

Residues Ala-1 to His-71 form the Disintegrin domain. 6 disulfide bridges follow: Cys-5–Cys-20, Cys-7–Cys-15, Cys-14–Cys-37, Cys-28–Cys-34, Cys-33–Cys-58, and Cys-46–Cys-65. The Cell attachment site signature appears at Arg-50–Asp-52.

This sequence belongs to the venom metalloproteinase (M12B) family. P-II subfamily. P-IIa sub-subfamily. In terms of assembly, monomer. In terms of tissue distribution, expressed by the venom gland.

It localises to the secreted. In terms of biological role, inhibits ADP- (IC(50)=56 nM) and collagen-induced (IC(50)=49 nM) aggregation of human platelets. In vitro, inhibits adhesion of endothelial cells to vitronectin, type-I collagen and, to a lower degree, fibronectin and laminin. The polypeptide is Disintegrin simusmin (Crotalus simus (Central American rattlesnake)).